We begin with the raw amino-acid sequence, 584 residues long: Protein phosphatase 2A scaffold subunit (584 aa).

HEAT repeat units lie at residues 7–45 (ESDD…ALGP), 46–84 (ERTR…FVGG), 86–123 (EHAV…EIPT), 168–206 (LRKT…VKSE), 207–239 (ILPL…MLTN), 240–278 (EENI…SMGT), 279–317 (EITK…LLTK), 318–356 (EMNI…IYGK), 358–395 (DTLT…VIGI), 397–434 (MLSQ…QLGV), 441–479 (LGNL…AKNN), 480–512 (IIPK…VVGG), 513–551 (DVIS…LLDS), and 553–584 (IVQS…LQLC).

The protein belongs to the phosphatase 2A regulatory subunit A family. As to quaternary structure, component of the Sca1 complex composed of at least gefA, gefH, scaA, phr, and the protein phosphatase 2A subunits pppA and pho2B.

It is found in the cytoplasm. It localises to the cytosol. The protein resides in the cell membrane. Scaffolding molecule which may coordinate the assembly of the catalytic subunit and a variable regulatory B subunit. Component of the Sca1 complex, a regulator of cell motility, chemotaxis and signal relay. The Sca1 complex is recruited to the plasma membrane in a chemoattractant- and F-actin-dependent manner and is enriched at the leading edge of chemotaxing cells where it regulates F-actin dynamics and signal relay by controlling the activation of rasC and the downstream target of rapamycin complex 2 (TORC2)-Akt/protein kinase B (PKB) pathway. The polypeptide is Protein phosphatase 2A scaffold subunit (pppA) (Dictyostelium discoideum (Social amoeba)).